A 483-amino-acid polypeptide reads, in one-letter code: Pre-glycoprotein polyprotein GP complex (483 aa).

Gly2 carries the N-myristoyl glycine; by host lipid modification. Residues 2-17 (GQFISFMQEIPIFLQE) are Extracellular-facing. The chain crosses the membrane as a helical span at residues 18-32 (ALNIALVAVSLICIV). Residue Lys33 is a topological domain, cytoplasmic. A helical membrane pass occupies residues 34–53 (GLVNLYRCGLFQLMVFLVLA). Extracellular-facing segments span residues 54–58 (GRSCS) and 59–422 (EETF…TLVD). A Zn(2+)-binding site is contributed by Cys57. N-linked (GlcNAc...) asparagine; by host glycans are attached at residues Asn83 and Asn95. Cystine bridges form between Cys92-Cys224, Cys134-Cys162, Cys205-Cys211, Cys269-Cys282, Cys291-Cys300, and Cys354-Cys375. N-linked (GlcNAc...) asparagine; by host glycosylation is found at Asn164 and Asn176. Residues Asn355, Asn363, Asn380, and Asn385 are each glycosylated (N-linked (GlcNAc...) asparagine; by host). The chain crosses the membrane as a helical span at residues 423–443 (ICFWSTVFFTSTLFLHLIGFP). Residues 444 to 483 (THEHIRGEGCPLPHRLNSMGGCRCGKYLPLKKPTIWHRRH) are Cytoplasmic-facing. Residues His445, His447, Cys453, His457, Cys465, Cys467, and His483 each coordinate Zn(2+).

This sequence belongs to the arenaviridae GPC protein family. As to quaternary structure, homotetramer; disulfide-linked. Homotetramer. GP2 homotetramers bind through ionic interactions with GP1 homotetramers to form the GP complex together with the stable signal peptide. The GP-C polyprotein interacts with the host protease MBTPS1/SKI-1 resulting in the polyprotein processing. Specific enzymatic cleavages in vivo yield mature proteins. GP-C polyprotein is cleaved in the endoplasmic reticulum by the host protease MBTPS1. Only cleaved glycoprotein is incorporated into virions. In terms of processing, the SSP remains stably associated with the GP complex following cleavage by signal peptidase and plays crucial roles in the trafficking of GP through the secretory pathway. Post-translationally, myristoylation is necessary for GP2-mediated fusion activity.

The protein resides in the virion membrane. The protein localises to the host endoplasmic reticulum membrane. It is found in the host Golgi apparatus membrane. It localises to the host cell membrane. In terms of biological role, class I viral fusion protein that directs fusion of viral and host endosomal membranes, leading to delivery of the nucleocapsid into the cytoplasm. Membrane fusion is mediated by irreversible conformational changes induced upon acidification in the endosome. Its function is as follows. Stable signal peptide (SSP): cleaved and functions as a signal peptide. In addition, it is also retained as the third component of the GP complex. The SSP is required for efficient glycoprotein expression, post-translational maturation cleavage of GP1 and GP2, glycoprotein transport to the cell surface plasma membrane, formation of infectious virus particles, and acid pH-dependent glycoprotein-mediated cell fusion. Interacts with the host receptor. This chain is Pre-glycoprotein polyprotein GP complex, found in Tacaribe virus (strain V5) (TCRV).